Consider the following 642-residue polypeptide: Threonine--tRNA ligase (642 aa).

Residues 1 to 61 enclose the TGS domain; sequence MPVITLPDGS…ENDATLAIIT (61 aa). The interval 243–534 is catalytic; the sequence is DHRKIGKQLD…LTEEFAGFFP (292 aa). C334, H385, and H511 together coordinate Zn(2+).

This sequence belongs to the class-II aminoacyl-tRNA synthetase family. Homodimer. The cofactor is Zn(2+).

It is found in the cytoplasm. It carries out the reaction tRNA(Thr) + L-threonine + ATP = L-threonyl-tRNA(Thr) + AMP + diphosphate + H(+). Catalyzes the attachment of threonine to tRNA(Thr) in a two-step reaction: L-threonine is first activated by ATP to form Thr-AMP and then transferred to the acceptor end of tRNA(Thr). Also edits incorrectly charged L-seryl-tRNA(Thr). This chain is Threonine--tRNA ligase, found in Salmonella choleraesuis (strain SC-B67).